A 415-amino-acid chain; its full sequence is 3-isopropylmalate dehydratase large subunit (415 aa).

[4Fe-4S] cluster is bound by residues Cys-295, Cys-353, and Cys-356.

This sequence belongs to the aconitase/IPM isomerase family. LeuC type 2 subfamily. Heterodimer of LeuC and LeuD. [4Fe-4S] cluster serves as cofactor.

It catalyses the reaction (2R,3S)-3-isopropylmalate = (2S)-2-isopropylmalate. It functions in the pathway amino-acid biosynthesis; L-leucine biosynthesis; L-leucine from 3-methyl-2-oxobutanoate: step 2/4. Functionally, catalyzes the isomerization between 2-isopropylmalate and 3-isopropylmalate, via the formation of 2-isopropylmaleate. In Pyrobaculum arsenaticum (strain DSM 13514 / JCM 11321 / PZ6), this protein is 3-isopropylmalate dehydratase large subunit.